The chain runs to 465 residues: Pleckstrin homology domain-containing family S member 1 (465 aa).

In terms of domain architecture, PH spans 14–129 (EVCKQDYFIK…WVSFMSSFRQ (116 aa)). A compositionally biased stretch (polar residues) spans 159–173 (PSSTSEAVGSSSPRN). 2 disordered regions span residues 159 to 179 (PSST…QDKH) and 258 to 283 (ETSH…GDLH). Basic and acidic residues predominate over residues 258 to 271 (ETSHESVDSSKEEP).

The chain is Pleckstrin homology domain-containing family S member 1 from Homo sapiens (Human).